Reading from the N-terminus, the 342-residue chain is Ferredoxin--NADP reductase (342 aa).

Positions 17, 36, 44, 49, 89, 124, 289, and 330 each coordinate FAD.

It belongs to the ferredoxin--NADP reductase type 2 family. Homodimer. The cofactor is FAD.

The enzyme catalyses 2 reduced [2Fe-2S]-[ferredoxin] + NADP(+) + H(+) = 2 oxidized [2Fe-2S]-[ferredoxin] + NADPH. This is Ferredoxin--NADP reductase from Bradyrhizobium sp. (strain BTAi1 / ATCC BAA-1182).